We begin with the raw amino-acid sequence, 217 residues long: Large ribosomal subunit protein bL25 (217 aa).

Positions 195–211 (PAEGAAAAPAKGAAKGA) are enriched in low complexity. Positions 195 to 217 (PAEGAAAAPAKGAAKGAAKGGKK) are disordered.

This sequence belongs to the bacterial ribosomal protein bL25 family. CTC subfamily. Part of the 50S ribosomal subunit; part of the 5S rRNA/L5/L18/L25 subcomplex. Contacts the 5S rRNA. Binds to the 5S rRNA independently of L5 and L18.

In terms of biological role, this is one of the proteins that binds to the 5S RNA in the ribosome where it forms part of the central protuberance. The protein is Large ribosomal subunit protein bL25 of Acidiphilium cryptum (strain JF-5).